The primary structure comprises 466 residues: 3-isopropylmalate dehydratase large subunit (466 aa).

[4Fe-4S] cluster is bound by residues Cys347, Cys407, and Cys410.

The protein belongs to the aconitase/IPM isomerase family. LeuC type 1 subfamily. Heterodimer of LeuC and LeuD. [4Fe-4S] cluster serves as cofactor.

The enzyme catalyses (2R,3S)-3-isopropylmalate = (2S)-2-isopropylmalate. Its pathway is amino-acid biosynthesis; L-leucine biosynthesis; L-leucine from 3-methyl-2-oxobutanoate: step 2/4. In terms of biological role, catalyzes the isomerization between 2-isopropylmalate and 3-isopropylmalate, via the formation of 2-isopropylmaleate. This is 3-isopropylmalate dehydratase large subunit from Shigella sonnei (strain Ss046).